Here is a 133-residue protein sequence, read N- to C-terminus: Ribonuclease VapC29 (133 aa).

In terms of domain architecture, PINc spans 3–122 (VLLDANVLIA…TLDSGLAHLH (120 aa)). Mg(2+) is bound by residues Asp6 and Asp97.

The protein belongs to the PINc/VapC protein family. Mg(2+) serves as cofactor.

Toxic component of a type II toxin-antitoxin (TA) system. Its cognate antitoxin is VapB29. Has ribonuclease activity. This chain is Ribonuclease VapC29, found in Mycobacterium tuberculosis (strain CDC 1551 / Oshkosh).